The primary structure comprises 901 residues: Protein translocase subunit SecA (901 aa).

Residues glutamine 87, 105 to 109, and aspartate 512 contribute to the ATP site; that span reads GEGKT. The interval 859–901 is disordered; that stretch reads HQDDDSAAAAALAAQTGERKVGRNDPCPCGSGKKYKQCHGRLQ. Cysteine 885, cysteine 887, cysteine 896, and histidine 897 together coordinate Zn(2+). Basic residues predominate over residues 891-901; it reads KKYKQCHGRLQ.

This sequence belongs to the SecA family. Monomer and homodimer. Part of the essential Sec protein translocation apparatus which comprises SecA, SecYEG and auxiliary proteins SecDF-YajC and YidC. Zn(2+) is required as a cofactor.

The protein resides in the cell inner membrane. The protein localises to the cytoplasm. The catalysed reaction is ATP + H2O + cellular proteinSide 1 = ADP + phosphate + cellular proteinSide 2.. In terms of biological role, part of the Sec protein translocase complex. Interacts with the SecYEG preprotein conducting channel. Has a central role in coupling the hydrolysis of ATP to the transfer of proteins into and across the cell membrane, serving both as a receptor for the preprotein-SecB complex and as an ATP-driven molecular motor driving the stepwise translocation of polypeptide chains across the membrane. The polypeptide is Protein translocase subunit SecA (Escherichia coli O127:H6 (strain E2348/69 / EPEC)).